Here is a 607-residue protein sequence, read N- to C-terminus: Elongation factor 4 (607 aa).

A tr-type G domain is found at 11-193 (SKIRNFSIIA…QIVEKVPAPT (183 aa)). Residues 23 to 28 (DHGKST) and 140 to 143 (NKID) contribute to the GTP site.

The protein belongs to the TRAFAC class translation factor GTPase superfamily. Classic translation factor GTPase family. LepA subfamily.

The protein localises to the cell membrane. The enzyme catalyses GTP + H2O = GDP + phosphate + H(+). In terms of biological role, required for accurate and efficient protein synthesis under certain stress conditions. May act as a fidelity factor of the translation reaction, by catalyzing a one-codon backward translocation of tRNAs on improperly translocated ribosomes. Back-translocation proceeds from a post-translocation (POST) complex to a pre-translocation (PRE) complex, thus giving elongation factor G a second chance to translocate the tRNAs correctly. Binds to ribosomes in a GTP-dependent manner. The polypeptide is Elongation factor 4 (Bacillus anthracis (strain CDC 684 / NRRL 3495)).